A 399-amino-acid chain; its full sequence is La protein 2 (399 aa).

Residues 3–106 (SSFNEETAKK…GRGTKLSKPE (104 aa)) form the HTH La-type RNA-binding domain. Positions 115-192 (RTLAASPFEY…ADLVLIPKSD (78 aa)) constitute an RRM domain. A xRRM domain is found at 269-399 (SLCKDNTDQL…QPTKKARKEP (131 aa)). The tract at residues 367-399 (AELEGGKEGHKKEKGKDECFENVQPTKKARKEP) is disordered. Residues 370 to 385 (EGGKEGHKKEKGKDEC) show a composition bias toward basic and acidic residues.

As to expression, expressed ubiquitously (at protein level).

Its subcellular location is the nucleus. It localises to the nucleoplasm. It is found in the nucleolus. Its function is as follows. Binds to the 3' poly(U) terminus of nascent RNA polymerase III transcripts, protecting them from exonuclease digestion and facilitating their folding and maturation. This Arabidopsis thaliana (Mouse-ear cress) protein is La protein 2 (LA2).